A 163-amino-acid polypeptide reads, in one-letter code: MLTKIGLYTGSFDPVTNGHLDIVKRASGLFDQIYVGIFDNPTKKSYFKLEVRKAMLTQALADFTNVIVVTSHERLAIDVAKELRVTHLIRGLRNATDFEYEENLEYFNHLLAPNIETVYLISRNKWQALSSSRVRELIHFQSSLEGLVPQSVIAQVEKMNEKT.

Residue S11 participates in substrate binding. ATP-binding positions include 11 to 12 (SF) and H19. Residues K43, A76, and R90 each coordinate substrate. ATP-binding positions include 91–93 (GLR), E101, and 126–132 (WQALSSS).

The protein belongs to the bacterial CoaD family. Homohexamer. It depends on Mg(2+) as a cofactor.

Its subcellular location is the cytoplasm. It catalyses the reaction (R)-4'-phosphopantetheine + ATP + H(+) = 3'-dephospho-CoA + diphosphate. It participates in cofactor biosynthesis; coenzyme A biosynthesis; CoA from (R)-pantothenate: step 4/5. Functionally, reversibly transfers an adenylyl group from ATP to 4'-phosphopantetheine, yielding dephospho-CoA (dPCoA) and pyrophosphate. The chain is Phosphopantetheine adenylyltransferase from Streptococcus pyogenes serotype M6 (strain ATCC BAA-946 / MGAS10394).